We begin with the raw amino-acid sequence, 215 residues long: Adenylate kinase (215 aa).

10-15 (GAGKGT) provides a ligand contact to ATP. Residues 30-59 (STGDIFRDAVNQGSELGQEAQKYMSSGQLV) form an NMP region. AMP contacts are provided by residues Thr-31, Arg-36, 57-59 (QLV), 85-88 (GFPR), and Gln-92. Positions 126-163 (GRISCRECKRVYNLNFNPPREQGKCDSCGGELVQRNDD) are LID. Arg-127 is an ATP binding site. Zn(2+) contacts are provided by Cys-130 and Cys-133. 136–137 (VY) provides a ligand contact to ATP. 2 residues coordinate Zn(2+): Cys-150 and Cys-153. Arg-160 and Arg-171 together coordinate AMP. Residue Arg-199 participates in ATP binding.

This sequence belongs to the adenylate kinase family. Monomer.

Its subcellular location is the cytoplasm. The enzyme catalyses AMP + ATP = 2 ADP. It functions in the pathway purine metabolism; AMP biosynthesis via salvage pathway; AMP from ADP: step 1/1. Functionally, catalyzes the reversible transfer of the terminal phosphate group between ATP and AMP. Plays an important role in cellular energy homeostasis and in adenine nucleotide metabolism. The protein is Adenylate kinase of Syntrophomonas wolfei subsp. wolfei (strain DSM 2245B / Goettingen).